The primary structure comprises 406 residues: Tryptophan 2,3-dioxygenase (406 aa).

Phosphoserine is present on serine 19. Substrate-binding positions include 72-76 (FIITH) and arginine 144. Histidine 328 serves as a coordination point for heme. Residue threonine 342 participates in substrate binding.

This sequence belongs to the tryptophan 2,3-dioxygenase family. Homotetramer. Dimer of dimers. Heme is required as a cofactor.

The enzyme catalyses L-tryptophan + O2 = N-formyl-L-kynurenine. It functions in the pathway amino-acid degradation; L-tryptophan degradation via kynurenine pathway; L-kynurenine from L-tryptophan: step 1/2. Functionally, heme-dependent dioxygenase that catalyzes the oxidative cleavage of the L-tryptophan (L-Trp) pyrrole ring and converts L-tryptophan to N-formyl-L-kynurenine. Catalyzes the oxidative cleavage of the indole moiety. The chain is Tryptophan 2,3-dioxygenase from Bos taurus (Bovine).